The primary structure comprises 96 residues: Large ribosomal subunit protein uL23 (96 aa).

This sequence belongs to the universal ribosomal protein uL23 family. In terms of assembly, part of the 50S ribosomal subunit. Contacts protein L29, and trigger factor when it is bound to the ribosome.

In terms of biological role, one of the early assembly proteins it binds 23S rRNA. One of the proteins that surrounds the polypeptide exit tunnel on the outside of the ribosome. Forms the main docking site for trigger factor binding to the ribosome. This chain is Large ribosomal subunit protein uL23, found in Caldanaerobacter subterraneus subsp. tengcongensis (strain DSM 15242 / JCM 11007 / NBRC 100824 / MB4) (Thermoanaerobacter tengcongensis).